Reading from the N-terminus, the 389-residue chain is Putative zinc finger CCCH domain-containing protein 10 (389 aa).

Residues 1-11 (MANVSFTFDSQ) show a composition bias toward polar residues. Residues 1 to 110 (MANVSFTFDS…QDRRGSESRM (110 aa)) are disordered. 2 stretches are compositionally biased toward basic and acidic residues: residues 12–52 (EQNK…RVSE) and 86–110 (RSHETESRLWQRARTQDRRGSESRM). 2 C3H1-type zinc fingers span residues 131–157 (RPGEDNCLFYMKNHLCEWGSECCYNHP) and 158–190 (PLQEIPCRIGKKLDCKAGACKRGSNCPFNHPKE). The disordered stretch occupies residues 183–296 (CPFNHPKERD…ATATGKVSGK (114 aa)). 2 stretches are compositionally biased toward basic and acidic residues: residues 204–243 (PDLRRNDSGRRYNTESRSWPENKEKEVGQFRDHQDSKEDA) and 251–284 (RPRDVEMRKRSRSPDFRAKTETKEHREAEERSSR).

The protein is Putative zinc finger CCCH domain-containing protein 10 of Arabidopsis thaliana (Mouse-ear cress).